We begin with the raw amino-acid sequence, 92 residues long: UPF0250 protein XAC0666 (92 aa).

It belongs to the UPF0250 family.

This Xanthomonas axonopodis pv. citri (strain 306) protein is UPF0250 protein XAC0666.